The chain runs to 986 residues: Translation initiation factor IF-2 (986 aa).

Residues 95-394 (TFVRRDETSA…GRGKHQDQNT (300 aa)) are disordered. Over residues 122–182 (ELQRREEEAR…EEEAAKKRAA (61 aa)) the composition is skewed to basic and acidic residues. The segment covering 183–222 (AEAAAREQAQAAKPAQAAQPAAAKAEPVAAKAAEPAVAKQ) has biased composition (low complexity). A compositionally biased stretch (basic and acidic residues) spans 228 to 277 (ERAAAERAAQREAAKKAEDAARQAAEKARAEQEQIAKRRAAAEAEARAIR). Residues 320–342 (APSRPAAKKPAAAAPAATTTPSA) are compositionally biased toward low complexity. A compositionally biased stretch (gly residues) spans 371-384 (TSGGVDRGWRGGPK). Residues 486–655 (PRPPVVTVMG…LLQAEVLELK (170 aa)) form the tr-type G domain. Residues 495 to 502 (GHVDHGKT) form a G1 region. 495–502 (GHVDHGKT) contacts GTP. The G2 stretch occupies residues 520 to 524 (GITQH). Positions 541 to 544 (DTPG) are G3. GTP is bound by residues 541–545 (DTPGH) and 595–598 (NKID). The tract at residues 595–598 (NKID) is G4. The tract at residues 631–633 (SAK) is G5.

This sequence belongs to the TRAFAC class translation factor GTPase superfamily. Classic translation factor GTPase family. IF-2 subfamily.

Its subcellular location is the cytoplasm. Functionally, one of the essential components for the initiation of protein synthesis. Protects formylmethionyl-tRNA from spontaneous hydrolysis and promotes its binding to the 30S ribosomal subunits. Also involved in the hydrolysis of GTP during the formation of the 70S ribosomal complex. The chain is Translation initiation factor IF-2 from Paraburkholderia phytofirmans (strain DSM 17436 / LMG 22146 / PsJN) (Burkholderia phytofirmans).